The sequence spans 723 residues: MCSPASSKILYRNPRFLRVAFLQLHHQQQSGVFCDALLQAEGEAVPAHCCILSACSPFFTERLERERPVQGRKVVLEMGGLKIQTLRKLVDFLYTSEMEVSQEEAQDVLSAARQLRVSELETLQLEGGKLVKAPQGRRLNRECLQPPAAAPISARVVGPKSRPQTPLPVTQTPSPLGAVRLKSLGEEEGAHKKTNLPNADSLSDTQLKKKARVCLTQESRSSPSSQREGPKETKSNPGPTALPSLYPSVDEQLLPRKIRLSRSKPSPHVYTSTPSSILSGPSSMPTAPGRRLWRQRTVSKEAQGVDKQKPGEVRPLQSTPDPSDVGKPAENKKQSPELRAPTSSSVEEGQVGRVKLRKIVNGTCWEVVQEPPLRNTQDSPQILEPSDVEEPSGTLLSSVNEQEIPARIQLCQDSPESPRLQDILLSASHSPDHPMVKSEFGSSPMLTGKESDLNIDCREPYTFDTTLLGQPCEAEQYRITSAAATSELEEIFDFMLCGSDVEPPVGSLESPGAEGCRTPSYHLSETGKNWIEGEEWCLPDMELWPRDLTGLEKEPVSENKEPVEPFSPLVMRSENTESFEPLSPLVMPSEVSREELSLRGSWTPDLEITSSQPLDGQGEKLLHFDSSDPSQRSYNHLSPPCSDWAETGLEVSLGMDDVLCPVPKAVREVSANPEQLDPLPGSSEDEEIDVVDWTVEKKLGPTSVPSVWPDPSSESETEVDILT.

The BTB domain occupies 34-102 (CDALLQAEGE…LYTSEMEVSQ (69 aa)). Disordered regions lie at residues 150–176 (APISARVVGPKSRPQTPLPVTQTPSPL), 188–350 (EGAH…EEGQ), and 370–394 (EPPLRNTQDSPQILEPSDVEEPSGT). Polar residues-rich tracts occupy residues 162–174 (RPQTPLPVTQTPS) and 195–205 (NLPNADSLSDT). 2 stretches are compositionally biased toward low complexity: residues 217 to 227 (QESRSSPSSQR) and 271 to 286 (TSTPSSILSGPSSMPT). 2 stretches are compositionally biased toward basic and acidic residues: residues 303-312 (QGVDKQKPGE) and 327-336 (KPAENKKQSP). Ser-414 is subject to Phosphoserine. The segment at 603–637 (TPDLEITSSQPLDGQGEKLLHFDSSDPSQRSYNHL) is disordered. The segment covering 617-626 (QGEKLLHFDS) has biased composition (basic and acidic residues). Over residues 627-636 (SDPSQRSYNH) the composition is skewed to polar residues. A phosphoserine mark is found at Ser-682 and Ser-683. A disordered region spans residues 699 to 723 (LGPTSVPSVWPDPSSESETEVDILT). Residues 713-723 (SESETEVDILT) are compositionally biased toward acidic residues.

In terms of tissue distribution, expressed in testis.

Its subcellular location is the nucleus. Specifically required during spermatogenesis to promote expression of piRNA precursors. The piRNA metabolic process mediates the repression of transposable elements during meiosis by forming complexes composed of piRNAs and Piwi proteins and governs the methylation and subsequent repression of transposons, which is essential for the germline integrity. Acts by facilitating transcription elongation at piRNA loci during pachytene. This is BTB/POZ domain-containing protein 18 from Mus musculus (Mouse).